The primary structure comprises 83 residues: Apolipoprotein C-I (83 aa).

Residues 1-26 form the signal peptide; the sequence is MRLILSLPVLAVVLAMVLEGPAPAQA.

It belongs to the apolipoprotein C1 family.

It is found in the secreted. In terms of biological role, inhibitor of lipoprotein binding to the low density lipoprotein (LDL) receptor, LDL receptor-related protein, and very low density lipoprotein (VLDL) receptor. Associates with high density lipoproteins (HDL) and the triacylglycerol-rich lipoproteins in the plasma and makes up about 10% of the protein of the VLDL and 2% of that of HDL. Appears to interfere directly with fatty acid uptake and is also the major plasma inhibitor of cholesteryl ester transfer protein (CETP). Binds free fatty acids and reduces their intracellular esterification. Modulates the interaction of APOE with beta-migrating VLDL and inhibits binding of beta-VLDL to the LDL receptor-related protein. This is Apolipoprotein C-I (APOC1) from Eonycteris spelaea (Lesser dawn bat).